We begin with the raw amino-acid sequence, 241 residues long: DNA repair protein RecO (241 aa).

Belongs to the RecO family.

Functionally, involved in DNA repair and RecF pathway recombination. In Yersinia enterocolitica serotype O:8 / biotype 1B (strain NCTC 13174 / 8081), this protein is DNA repair protein RecO.